Reading from the N-terminus, the 968-residue chain is RNA polymerase-associated protein RapA (968 aa).

In terms of domain architecture, Helicase ATP-binding spans 164-334 (DVGRRHAPRV…FARLRLLDPN (171 aa)). 177-184 (DEVGLGKT) provides a ligand contact to ATP. The DEAH box motif lies at 280-283 (DEAH). A Helicase C-terminal domain is found at 490–662 (RVEWLMGYLT…YLASPDQTEG (173 aa)).

It belongs to the SNF2/RAD54 helicase family. RapA subfamily. As to quaternary structure, interacts with the RNAP. Has a higher affinity for the core RNAP than for the holoenzyme. Its ATPase activity is stimulated by binding to RNAP.

Its function is as follows. Transcription regulator that activates transcription by stimulating RNA polymerase (RNAP) recycling in case of stress conditions such as supercoiled DNA or high salt concentrations. Probably acts by releasing the RNAP, when it is trapped or immobilized on tightly supercoiled DNA. Does not activate transcription on linear DNA. Probably not involved in DNA repair. This chain is RNA polymerase-associated protein RapA, found in Shigella flexneri serotype 5b (strain 8401).